The sequence spans 886 residues: Protein O-mannosyltransferase 1 (886 aa).

Composition is skewed to polar residues over residues 1–10 (MSATYTNTIT) and 18–34 (VRQQ…LSGE). Disordered stretches follow at residues 1–37 (MSAT…ESNE) and 88–161 (RGSV…KTAN). Residues 105–139 (PTPVATPKQASPSPTSDRSRSLSRSPSPSRSRSLS) show a composition bias toward low complexity. Asparagine 161 and asparagine 242 each carry an N-linked (GlcNAc...) asparagine glycan. A run of 4 helical transmembrane segments spans residues 256-276 (MPIF…APAV), 310-330 (VLME…LLRF), 349-369 (VCLG…GLAF), and 398-418 (LLIF…IHFK). 3 consecutive MIR domains span residues 450-511 (PLAV…VKRP), 522-579 (PDII…VEIL), and 585-642 (GDIW…VEEH). A run of 3 helical transmembrane segments spans residues 727 to 747 (ILLW…LAFY), 791 to 811 (LFLH…CFVV), and 835 to 855 (LMLI…IPFS).

Belongs to the glycosyltransferase 39 family. Interacts with tw/POMT2. In terms of tissue distribution, at the cellular blastoderm stage, expression accumulates in the ventrally located mesoderm primordium. At germ band extension, mesoderm expression is seen as stripes of strong expression. A very strong signal is also detected in the invaginating gut. As the germ band retracts, mesodermal expression decays and becomes restricted to somatic muscle precursors. After dorsal closure, expression has disappeared from the mesoderm and remains in the endoderm. Some expression is detected in a few cells of the head and the pharyngeal muscles.

It localises to the endoplasmic reticulum membrane. It carries out the reaction a di-trans,poly-cis-dolichyl beta-D-mannosyl phosphate + L-seryl-[protein] = 3-O-(alpha-D-mannosyl)-L-seryl-[protein] + a di-trans,poly-cis-dolichyl phosphate + H(+). The catalysed reaction is a di-trans,poly-cis-dolichyl beta-D-mannosyl phosphate + L-threonyl-[protein] = 3-O-(alpha-D-mannosyl)-L-threonyl-[protein] + a di-trans,poly-cis-dolichyl phosphate + H(+). Its pathway is protein modification; protein glycosylation. Functionally, rt/POMT1 and tw/POMT2 function as a protein O-mannosyltransferase in association with each other to generate and maintain normal muscle development. The polypeptide is Protein O-mannosyltransferase 1 (Drosophila melanogaster (Fruit fly)).